A 199-amino-acid chain; its full sequence is Large ribosomal subunit protein bL17 (199 aa).

The segment at 123-199 (DEANRARRAA…EESEAKDDTK (77 aa)) is disordered. A compositionally biased stretch (basic and acidic residues) spans 137–152 (KADERADEKADEKAEE). The segment covering 153-199 (TVEETTEAPAEESTEAAAEETVEETTEAPAEESTEAAEESEAKDDTK) has biased composition (acidic residues).

The protein belongs to the bacterial ribosomal protein bL17 family. In terms of assembly, part of the 50S ribosomal subunit. Contacts protein L32.

This Mycolicibacterium smegmatis (strain ATCC 700084 / mc(2)155) (Mycobacterium smegmatis) protein is Large ribosomal subunit protein bL17.